The primary structure comprises 139 residues: Transcription antitermination protein NusB (139 aa).

This sequence belongs to the NusB family.

Functionally, involved in transcription antitermination. Required for transcription of ribosomal RNA (rRNA) genes. Binds specifically to the boxA antiterminator sequence of the ribosomal RNA (rrn) operons. The polypeptide is Transcription antitermination protein NusB (Escherichia coli (strain K12 / MC4100 / BW2952)).